Here is a 239-residue protein sequence, read N- to C-terminus: Geranylgeranylglyceryl phosphate synthase (239 aa).

A sn-glycerol 1-phosphate-binding site is contributed by Lys-13. Mg(2+)-binding residues include Asp-15 and Thr-42. Sn-glycerol 1-phosphate-binding positions include 162 to 167 (YIEYSG), Gly-192, and 212 to 213 (GD).

This sequence belongs to the GGGP/HepGP synthase family. Group I subfamily. Mg(2+) serves as cofactor.

The protein localises to the cytoplasm. It catalyses the reaction sn-glycerol 1-phosphate + (2E,6E,10E)-geranylgeranyl diphosphate = sn-3-O-(geranylgeranyl)glycerol 1-phosphate + diphosphate. It participates in membrane lipid metabolism; glycerophospholipid metabolism. Prenyltransferase that catalyzes the transfer of the geranylgeranyl moiety of geranylgeranyl diphosphate (GGPP) to the C3 hydroxyl of sn-glycerol-1-phosphate (G1P). This reaction is the first ether-bond-formation step in the biosynthesis of archaeal membrane lipids. The sequence is that of Geranylgeranylglyceryl phosphate synthase from Haloquadratum walsbyi (strain DSM 16790 / HBSQ001).